We begin with the raw amino-acid sequence, 210 residues long: Probable glutathione S-transferase gst-36 (210 aa).

Residues 2–79 (PHFKFYYFDV…YLGHQFHRAG (78 aa)) enclose the GST N-terminal domain. Glutathione contacts are provided by residues Tyr8, Trp39, Lys43, 49-51 (GQV), and 63-64 (QT). A GST C-terminal domain is found at 81–210 (NAVDCARLDM…YVSQRKATPA (130 aa)).

The protein belongs to the GST superfamily. Sigma family.

It catalyses the reaction RX + glutathione = an S-substituted glutathione + a halide anion + H(+). Conjugation of reduced glutathione to a wide number of exogenous and endogenous hydrophobic electrophiles. The polypeptide is Probable glutathione S-transferase gst-36 (gst-36) (Caenorhabditis elegans).